Here is a 175-residue protein sequence, read N- to C-terminus: MLYGDRSIENTDGTIRSLSNRHVQMIAIGGTIGTGLFLGAGTTISATGPSVIFIYAIMGLFFFFLLRALGEMFYFDSNSHTFVSFITRYLGEAAGRFAGWTYWIGILFACMAELTAVSTYVQYWLPGLPAWLIEVSVLGLLTLLNLTAAKLFGETEFWFAMIKIIAIISLVVTGI.

A run of 5 helical transmembrane segments spans residues 25–45, 46–66, 97–117, 124–144, and 155–175; these read MIAI…TTIS, ATGP…FFLL, FAGW…LTAV, WLPG…LTLL, and TEFW…VTGI.

It belongs to the amino acid-polyamine-organocation (APC) superfamily.

It is found in the cell membrane. This is an uncharacterized protein from Lactobacillus delbrueckii subsp. lactis.